We begin with the raw amino-acid sequence, 134 residues long: L-ectoine synthase (134 aa).

It belongs to the ectoine synthase family.

It carries out the reaction (2S)-4-acetamido-2-aminobutanoate = L-ectoine + H2O. It participates in amine and polyamine biosynthesis; ectoine biosynthesis; L-ectoine from L-aspartate 4-semialdehyde: step 3/3. In terms of biological role, catalyzes the circularization of gamma-N-acetyl-alpha,gamma-diaminobutyric acid (ADABA) to ectoine (1,4,5,6-tetrahydro-2-methyl-4-pyrimidine carboxylic acid), which is an excellent osmoprotectant. The chain is L-ectoine synthase from Shouchella clausii (strain KSM-K16) (Alkalihalobacillus clausii).